The sequence spans 100 residues: MHLSPQEKDKLLIVTAALLAERRLNRGVKLNHPEAMAWLSFLVLEGARDGQTVAELMQAGTTWLRRDQVMEGVPELVEEVQIEAVFPDGTKLVTLHDPIR.

The protein belongs to the urease gamma subunit family. As to quaternary structure, heterotrimer of UreA (gamma), UreB (beta) and UreC (alpha) subunits. Three heterotrimers associate to form the active enzyme.

The protein localises to the cytoplasm. It carries out the reaction urea + 2 H2O + H(+) = hydrogencarbonate + 2 NH4(+). Its pathway is nitrogen metabolism; urea degradation; CO(2) and NH(3) from urea (urease route): step 1/1. This Synechococcus sp. (strain CC9902) protein is Urease subunit gamma.